The sequence spans 430 residues: Enolase (430 aa).

(2R)-2-phosphoglycerate is bound at residue glutamine 167. Catalysis depends on glutamate 209, which acts as the Proton donor. The Mg(2+) site is built by aspartate 245, glutamate 286, and aspartate 313. Residues lysine 338, arginine 367, serine 368, and lysine 389 each coordinate (2R)-2-phosphoglycerate. Residue lysine 338 is the Proton acceptor of the active site.

This sequence belongs to the enolase family. Mg(2+) serves as cofactor.

Its subcellular location is the cytoplasm. The protein localises to the secreted. It localises to the cell surface. The enzyme catalyses (2R)-2-phosphoglycerate = phosphoenolpyruvate + H2O. Its pathway is carbohydrate degradation; glycolysis; pyruvate from D-glyceraldehyde 3-phosphate: step 4/5. Its function is as follows. Catalyzes the reversible conversion of 2-phosphoglycerate (2-PG) into phosphoenolpyruvate (PEP). It is essential for the degradation of carbohydrates via glycolysis. The sequence is that of Enolase from Synechococcus sp. (strain CC9902).